Reading from the N-terminus, the 358-residue chain is Uptake hydrogenase small subunit (358 aa).

The tat-type signal signal peptide spans 1–45 (MSRLETFYDVMRRQGITRRSFLKYCSLTAAALGLGPAFAPRIAHA). Residues cysteine 62, cysteine 65, cysteine 160, cysteine 194, histidine 232, cysteine 235, cysteine 260, and cysteine 266 each contribute to the [4Fe-4S] cluster site. 3 residues coordinate [3Fe-4S] cluster: cysteine 275, cysteine 294, and cysteine 297.

It belongs to the [NiFe]/[NiFeSe] hydrogenase small subunit family. Heterodimer of a large and a small subunit. [4Fe-4S] cluster serves as cofactor. The cofactor is [3Fe-4S] cluster. In terms of processing, predicted to be exported by the Tat system. The position of the signal peptide cleavage has been experimentally proven.

The protein resides in the cell membrane. It catalyses the reaction H2 + A = AH2. Functionally, this enzyme recycles the H(2) produced by nitrogenase to increase the production of ATP and to protect nitrogenase against inhibition or damage by O(2) under carbon- or phosphate-limited conditions. This is Uptake hydrogenase small subunit (hoxK) from Azotobacter vinelandii.